The following is a 538-amino-acid chain: MEMELDSEGRMVVRPLLTDLYQATMALGYWRAGRACEAAEFELFFRHCPFGGSFALSAGLQDCMRFLRAFRLRDADVQFLASVLPPDTDPAFFEHLRALDCSGVTVRALPEGSLAFPGVPLLQVSGPLLLVQLLETPLLCLVSYASLVATNAARLRLIAGPDKKLLEMGLRRAQGPDGGFTASIYSYLGGFDSSSNTLAGQLRGVPVAGTLAHSFVTSFSGSEVPPDPMLAPASSEGPTVDLPARVNLWLKRVCLYLGLEEQEPHPGERAAFVAYALAFPRAFQGLLDSYSVRRSGLPNFLAVALALGELGYRAVGVRLDSGDLLQQAKEIRGIFRTAGAQFQMPWLESVPIAVSNNIDESELMRLAQKGSEVNVIGIGTSVVTCPKQPSMGCVYKLVSVGGQPRIKLTEDPEKQTLPGSKAAFRFLGPDGSLLLDLLQLAEEPPPKAGQELRVWPRGTQEPCTVKPAQVEPLLRLYLQQGQLCEPLPSLDESRRFAQQSLSLLRPAHKQLQSPAVYPVALSEKLRALVDSLSARGPL.

2 residues coordinate nicotinate: Tyr-21 and Thr-210. At His-213 the chain carries Phosphohistidine. Arg-318 contributes to the nicotinate binding site. Thr-380 provides a ligand contact to 5-phospho-alpha-D-ribose 1-diphosphate.

The protein belongs to the NAPRTase family. As to quaternary structure, homodimer. Mg(2+) serves as cofactor. It depends on Mn(2+) as a cofactor. Transiently phosphorylated on a His residue during the reaction cycle. Phosphorylation strongly increases the affinity for substrates and increases the rate of nicotinate D-ribonucleotide production. Dephosphorylation regenerates the low-affinity form of the enzyme, leading to product release. As to expression, abundantly expressed in the small intestine, liver and kidney.

It localises to the cytoplasm. Its subcellular location is the cytosol. The catalysed reaction is nicotinate + 5-phospho-alpha-D-ribose 1-diphosphate + ATP + H2O = nicotinate beta-D-ribonucleotide + ADP + phosphate + diphosphate. It participates in cofactor biosynthesis; NAD(+) biosynthesis; nicotinate D-ribonucleotide from nicotinate: step 1/1. In terms of biological role, catalyzes the first step in the biosynthesis of NAD from nicotinic acid, the ATP-dependent synthesis of beta-nicotinate D-ribonucleotide from nicotinate and 5-phospho-D-ribose 1-phosphate. Helps prevent cellular oxidative stress via its role in NAD biosynthesis. This Mus musculus (Mouse) protein is Nicotinate phosphoribosyltransferase (Naprt).